A 596-amino-acid chain; its full sequence is Elongation factor 4 (596 aa).

Positions 2–184 constitute a tr-type G domain; sequence KHIRNFSIIA…VIVAQIPPPE (183 aa). GTP contacts are provided by residues 14 to 19 and 131 to 134; these read DHGKST and NKID.

It belongs to the TRAFAC class translation factor GTPase superfamily. Classic translation factor GTPase family. LepA subfamily.

It localises to the cell inner membrane. It catalyses the reaction GTP + H2O = GDP + phosphate + H(+). Functionally, required for accurate and efficient protein synthesis under certain stress conditions. May act as a fidelity factor of the translation reaction, by catalyzing a one-codon backward translocation of tRNAs on improperly translocated ribosomes. Back-translocation proceeds from a post-translocation (POST) complex to a pre-translocation (PRE) complex, thus giving elongation factor G a second chance to translocate the tRNAs correctly. Binds to ribosomes in a GTP-dependent manner. This Shewanella woodyi (strain ATCC 51908 / MS32) protein is Elongation factor 4.